We begin with the raw amino-acid sequence, 330 residues long: Lysophospholipase D GDPD3 (330 aa).

A topological domain (cytoplasmic) is located at residue Met1. A helical membrane pass occupies residues Ile2–Phe22. At Leu23–Thr200 the chain is on the extracellular side. Residues Ile39–Leu308 enclose the GP-PDE domain. A divalent metal cation-binding residues include Glu71, Asp73, and His86. The chain crosses the membrane as a helical span at residues Ile201–Ile221. The Cytoplasmic segment spans residues Pro222 to Lys330. Residues Gln311–Lys330 are disordered.

The protein belongs to the glycerophosphoryl diester phosphodiesterase family. Highly expressed in stomach and kidney. In stomach detected in the glandular epithelium. Predominantly expressed in the stomach (at protein level).

It localises to the membrane. It is found in the cytoplasm. Its subcellular location is the perinuclear region. The protein localises to the endoplasmic reticulum membrane. The catalysed reaction is 1-hexadecanoyl-sn-glycero-3-phosphocholine + H2O = 1-hexadecanoyl-sn-glycero-3-phosphate + choline + H(+). It catalyses the reaction 1-O-hexadecyl-sn-glycero-3-phosphocholine + H2O = 1-O-hexadecyl-sn-glycero-3-phosphate + choline + H(+). The enzyme catalyses 1-O-(1Z-octadecenyl)-sn-glycero-3-phospho-N-hexadecanoyl-ethanolamine + H2O = 1-O-(1Z-octadecenyl)-sn-glycero-3-phosphate + N-hexadecanoylethanolamine + H(+). It carries out the reaction N-(5Z,8Z,11Z,14Z-eicosatetraenoyl)-1-(9Z-octadecenoyl)-sn-glycero-3-phosphoethanolamine + H2O = N-(5Z,8Z,11Z,14Z-eicosatetraenoyl)-ethanolamine + 1-(9Z-octadecenoyl)-sn-glycero-3-phosphate + H(+). The catalysed reaction is N,1-di-(9Z-octadecenoyl)-sn-glycero-3-phosphoethanolamine + H2O = N-(9Z-octadecenoyl) ethanolamine + 1-(9Z-octadecenoyl)-sn-glycero-3-phosphate + H(+). It catalyses the reaction N-hexadecanoyl-1-(9Z-octadecenoyl)-sn-glycero-3-phosphoethanolamine + H2O = N-hexadecanoylethanolamine + 1-(9Z-octadecenoyl)-sn-glycero-3-phosphate + H(+). The enzyme catalyses 1-hexadecanoyl-sn-glycero-3-phosphocholine + H2O = sn-glycerol 3-phosphocholine + hexadecanoate + H(+). With respect to regulation, lysophospholipase D activity is stimulated by calcium. Loss of lysophospholipase D activity in presence of EDTA. Hydrolyzes lysoglycerophospholipids to produce lysophosphatidic acid (LPA) and the corresponding amines. Shows a preference for 1-O-alkyl-sn-glycero-3-phosphocholine (lyso-PAF), lysophosphatidylcholine (lyso-PC) and N-acylethanolamine lysophospholipids. Does not display glycerophosphodiester phosphodiesterase activity, since it cannot hydrolyze either glycerophosphoinositol or glycerophosphocholine. The polypeptide is Lysophospholipase D GDPD3 (Mus musculus (Mouse)).